A 763-amino-acid chain; its full sequence is ATP-dependent RNA helicase SUV3 homolog, mitochondrial (763 aa).

The N-terminal 43 residues, 1–43, are a transit peptide targeting the mitochondrion; the sequence is MQNCRRCISLTGLLRMTLYLRPSFSIDLSLRRLHRAAFLFSRK. The region spanning 181–321 is the Helicase ATP-binding domain; that stretch reads NARAITRKIV…ALDLLQKICE (141 aa). 194–201 serves as a coordination point for ATP; sequence GPTNSGKT. In terms of domain architecture, Helicase C-terminal spans 330–508; that stretch reads RLYDRLTELT…PTADQIELYA (179 aa). Residues 724-763 form a disordered region; it reads AQQLGKSNSQSNENSEPVVNSDDEDNYSGIGRKTRKKRRK. The span at 727 to 741 shows a compositional bias: polar residues; the sequence is LGKSNSQSNENSEPV.

Belongs to the helicase family. The cofactor is Mg(2+). Requires Mn(2+) as cofactor.

It is found in the mitochondrion. It carries out the reaction ATP + H2O = ADP + phosphate + H(+). Major helicase player in mitochondrial RNA metabolism and maintenance. Likely component of the mitochondrial degradosome (mtEXO) complex, that degrades 3' overhang double-stranded RNA with a 3'-to-5' directionality in an ATP-dependent manner. ATPase and ATP-dependent multisubstrate helicase, able to unwind double-stranded (ds) DNA and RNA, and RNA/DNA heteroduplexes in the 5'-to-3' direction. Regulates mRNA stability and is required for the correct processing and maturation of mitochondrial transcripts. This chain is ATP-dependent RNA helicase SUV3 homolog, mitochondrial, found in Drosophila melanogaster (Fruit fly).